The chain runs to 416 residues: Homeobox even-skipped homolog protein 1 (416 aa).

Disordered regions lie at residues 30–120 (AVSS…SDFY) and 138–178 (YQHS…LACS). Positions 72–82 (GLAGSAAGLGA) are enriched in low complexity. The span at 102–114 (DSLSGQGQPSSSD) shows a compositional bias: polar residues. Positions 183–242 (MRRYRTAFTREQIARLEKEFYRENYVSRPRRCELAAALNLPETTIKVWFQNRRMKDKRQR) form a DNA-binding region, homeobox.

Belongs to the even-skipped homeobox family.

The protein resides in the nucleus. Functionally, may play a role in the specification of neuronal cell types. May play a role in the dorsoventral specification of mesodermal cell fate. The chain is Homeobox even-skipped homolog protein 1 (Evx1) from Mus musculus (Mouse).